Here is a 258-residue protein sequence, read N- to C-terminus: uncharacterized protein (258 aa).

Positions 40-54 (AQKTDTPLDSSSYAV) are enriched in polar residues. Residues 40–63 (AQKTDTPLDSSSYAVTSPEEAPNE) are disordered.

This is an uncharacterized protein from Treponema pallidum (strain Nichols).